The chain runs to 387 residues: Putative glutamate--cysteine ligase 2 (387 aa).

It belongs to the glutamate--cysteine ligase type 2 family. YbdK subfamily.

The enzyme catalyses L-cysteine + L-glutamate + ATP = gamma-L-glutamyl-L-cysteine + ADP + phosphate + H(+). Functionally, ATP-dependent carboxylate-amine ligase which exhibits weak glutamate--cysteine ligase activity. The chain is Putative glutamate--cysteine ligase 2 from Trichormus variabilis (strain ATCC 29413 / PCC 7937) (Anabaena variabilis).